We begin with the raw amino-acid sequence, 248 residues long: Adenosylcobinamide-GDP ribazoletransferase (248 aa).

Transmembrane regions (helical) follow at residues 36–56 (FFLP…YLAL), 59–79 (FLPP…ITGG), 114–134 (GTIA…SLVL), 137–157 (YSIA…FLCL), 170–190 (IFIG…VLAL), and 199–219 (ATII…LLCL).

This sequence belongs to the CobS family. Mg(2+) serves as cofactor.

The protein resides in the cell membrane. The catalysed reaction is alpha-ribazole + adenosylcob(III)inamide-GDP = adenosylcob(III)alamin + GMP + H(+). It carries out the reaction alpha-ribazole 5'-phosphate + adenosylcob(III)inamide-GDP = adenosylcob(III)alamin 5'-phosphate + GMP + H(+). It functions in the pathway cofactor biosynthesis; adenosylcobalamin biosynthesis; adenosylcobalamin from cob(II)yrinate a,c-diamide: step 7/7. Functionally, joins adenosylcobinamide-GDP and alpha-ribazole to generate adenosylcobalamin (Ado-cobalamin). Also synthesizes adenosylcobalamin 5'-phosphate from adenosylcobinamide-GDP and alpha-ribazole 5'-phosphate. The polypeptide is Adenosylcobinamide-GDP ribazoletransferase (Clostridium botulinum (strain Okra / Type B1)).